We begin with the raw amino-acid sequence, 284 residues long: RNase adapter protein RapZ (284 aa).

An ATP-binding site is contributed by 8-15; sequence GRSGSGKS. 56–59 lines the GTP pocket; it reads DVRN. Residues 266 to 284 form an RNA-binding region; it reads RSRGKNVQSRHRTLEKRKS.

The protein belongs to the RapZ-like family. RapZ subfamily. Homotrimer.

Functionally, modulates the synthesis of GlmS, by affecting the processing and stability of the regulatory small RNA GlmZ. When glucosamine-6-phosphate (GlcN6P) concentrations are high in the cell, RapZ binds GlmZ and targets it to cleavage by RNase E. Consequently, GlmZ is inactivated and unable to activate GlmS synthesis. Under low GlcN6P concentrations, RapZ is sequestered and inactivated by an other regulatory small RNA, GlmY, preventing GlmZ degradation and leading to synthesis of GlmS. The sequence is that of RNase adapter protein RapZ from Klebsiella pneumoniae (strain 342).